Consider the following 479-residue polypeptide: Probable aspartic-type endopeptidase OPSB (479 aa).

Residues Met1–Ala19 form the signal peptide. A Peptidase A1 domain is found at Ser58–Ala393. Asn68 carries N-linked (GlcNAc...) asparagine glycosylation. The active site involves Asp76. N-linked (GlcNAc...) asparagine glycosylation occurs at Asn121. Asp275 is an active-site residue. Residue Asn398 is glycosylated (N-linked (GlcNAc...) asparagine). The interval Leu435–Pro454 is disordered. The GPI-anchor amidated glycine moiety is linked to residue Gly451. A propeptide spans Ala452–Met479 (removed in mature form).

Belongs to the peptidase A1 family.

The protein resides in the cell membrane. Functionally, probable GPI-anchored aspartic-type endopeptidase which contributes to virulence. The polypeptide is Probable aspartic-type endopeptidase OPSB (OPSB) (Arthroderma otae (strain ATCC MYA-4605 / CBS 113480) (Microsporum canis)).